A 257-amino-acid chain; its full sequence is Probable septum site-determining protein MinC (257 aa).

Residues 123–141 (AVEAAAAPAAEPTPEPGAA) show a composition bias toward low complexity. The tract at residues 123–144 (AVEAAAAPAAEPTPEPGAASQP) is disordered.

This sequence belongs to the MinC family. Interacts with MinD and FtsZ.

In terms of biological role, cell division inhibitor that blocks the formation of polar Z ring septums. Rapidly oscillates between the poles of the cell to destabilize FtsZ filaments that have formed before they mature into polar Z rings. Prevents FtsZ polymerization. This is Probable septum site-determining protein MinC from Burkholderia multivorans (strain ATCC 17616 / 249).